We begin with the raw amino-acid sequence, 147 residues long: MLMPKRVKHRKVQRGRMKGKATRGNFIAYGDYGIQATECGWITSNQIESARIAINRYIRRGGKLWIKIFPDKPVTQKPAETRMGSGKGTPEYWVAVVKPGRVLFELTGVDEETAREAMRLAAHKLPVKTKFVKKSDFEEVGGEINEG.

This sequence belongs to the universal ribosomal protein uL16 family. Part of the 50S ribosomal subunit.

Binds 23S rRNA and is also seen to make contacts with the A and possibly P site tRNAs. This Clostridium tetani (strain Massachusetts / E88) protein is Large ribosomal subunit protein uL16.